The primary structure comprises 369 residues: Cytoplasmic tRNA 2-thiolation protein 1 (369 aa).

This sequence belongs to the TtcA family. CTU1/NCS6/ATPBD3 subfamily.

The protein localises to the cytoplasm. The protein operates within tRNA modification; 5-methoxycarbonylmethyl-2-thiouridine-tRNA biosynthesis. Functionally, plays a central role in 2-thiolation of mcm(5)S(2)U at tRNA wobble positions of tRNA(Lys), tRNA(Glu) and tRNA(Gln). Directly binds tRNAs and probably acts by catalyzing adenylation of tRNAs, an intermediate required for 2-thiolation. It is unclear whether it acts as a sulfurtransferase that transfers sulfur from thiocarboxylated URM1 onto the uridine of tRNAs at wobble position. Prior mcm(5) tRNA modification by the elongator complex is required for 2-thiolation. May also be involved in protein urmylation. In Meyerozyma guilliermondii (strain ATCC 6260 / CBS 566 / DSM 6381 / JCM 1539 / NBRC 10279 / NRRL Y-324) (Yeast), this protein is Cytoplasmic tRNA 2-thiolation protein 1.